A 209-amino-acid polypeptide reads, in one-letter code: N-(5'-phosphoribosyl)anthranilate isomerase (209 aa).

Belongs to the TrpF family.

The catalysed reaction is N-(5-phospho-beta-D-ribosyl)anthranilate = 1-(2-carboxyphenylamino)-1-deoxy-D-ribulose 5-phosphate. It functions in the pathway amino-acid biosynthesis; L-tryptophan biosynthesis; L-tryptophan from chorismate: step 3/5. This Granulibacter bethesdensis (strain ATCC BAA-1260 / CGDNIH1) protein is N-(5'-phosphoribosyl)anthranilate isomerase.